The chain runs to 119 residues: Phosphoribosyl-AMP cyclohydrolase (119 aa).

Asp71 contacts Mg(2+). Residue Cys72 participates in Zn(2+) binding. Residues Asp73 and Asp75 each contribute to the Mg(2+) site. Zn(2+) is bound by residues Cys90 and Cys97.

It belongs to the PRA-CH family. As to quaternary structure, homodimer. Mg(2+) serves as cofactor. Zn(2+) is required as a cofactor.

Its subcellular location is the cytoplasm. The enzyme catalyses 1-(5-phospho-beta-D-ribosyl)-5'-AMP + H2O = 1-(5-phospho-beta-D-ribosyl)-5-[(5-phospho-beta-D-ribosylamino)methylideneamino]imidazole-4-carboxamide. Its pathway is amino-acid biosynthesis; L-histidine biosynthesis; L-histidine from 5-phospho-alpha-D-ribose 1-diphosphate: step 3/9. In terms of biological role, catalyzes the hydrolysis of the adenine ring of phosphoribosyl-AMP. In Brucella abortus (strain 2308), this protein is Phosphoribosyl-AMP cyclohydrolase.